Reading from the N-terminus, the 351-residue chain is Phenylalanine--tRNA ligase alpha subunit (351 aa).

The tract at residues leucine 45–alanine 69 is disordered. Glutamate 269 contacts Mg(2+).

It belongs to the class-II aminoacyl-tRNA synthetase family. Phe-tRNA synthetase alpha subunit type 1 subfamily. In terms of assembly, tetramer of two alpha and two beta subunits. It depends on Mg(2+) as a cofactor.

It localises to the cytoplasm. It catalyses the reaction tRNA(Phe) + L-phenylalanine + ATP = L-phenylalanyl-tRNA(Phe) + AMP + diphosphate + H(+). This is Phenylalanine--tRNA ligase alpha subunit from Corynebacterium jeikeium (strain K411).